The following is an 846-amino-acid chain: Penicillin G acylase (846 aa).

The first 26 residues, 1 to 26 (MKNRNRMIVNCVTASLMYYWSLPALA), serve as a signal peptide directing secretion. Glutamate 178 provides a ligand contact to Ca(2+). Residues 236 to 289 (ALLPRYDLPAPMLDRPAKGADGALLALTAGKNRETIAAQFAQGGANGLAGYPTT) constitute a propeptide, spacer peptide. The active-site Nucleophile is the serine 290. Aspartate 362, valine 364, aspartate 365, proline 494, and aspartate 541 together coordinate Ca(2+).

The protein belongs to the peptidase S45 family. As to quaternary structure, heterodimer of an alpha subunit and a beta subunit processed from the same precursor. The cofactor is Ca(2+).

The protein resides in the periplasm. The enzyme catalyses a penicillin + H2O = 6-aminopenicillanate + a carboxylate. The protein is Penicillin G acylase (pac) of Escherichia coli.